Consider the following 625-residue polypeptide: Probable potassium transport system protein Kup (625 aa).

12 helical membrane-spanning segments follow: residues 13–33, 53–73, 103–123, 141–161, 172–192, 206–226, 250–270, 282–302, 340–360, 369–389, 400–420, and 422–442; these read TALA…LYAL, ILSI…VAIV, IYMI…GIIT, VFDP…FLVQ, FGPI…HSVI, AIQF…AVVL, WFFV…ALLL, LLVP…ATVI, IYVP…ILIF, AYGL…AVFI, VLLL…ATSL, and ILSG…ILMT.

It belongs to the HAK/KUP transporter (TC 2.A.72) family.

Its subcellular location is the cell inner membrane. The catalysed reaction is K(+)(in) + H(+)(in) = K(+)(out) + H(+)(out). Functionally, transport of potassium into the cell. Likely operates as a K(+):H(+) symporter. The protein is Probable potassium transport system protein Kup of Acinetobacter baumannii (strain ACICU).